The following is a 407-amino-acid chain: NADH dehydrogenase [ubiquinone] 1 alpha subcomplex subunit 10, mitochondrial (407 aa).

Residues 1–60 (MTAVFRVGLVRLVSRATQSPNLLQAQTNALPAAFQQRCSISGKTMRGGPRVPKAAPYPYK) constitute a mitochondrion transit peptide.

Belongs to the complex I NDUFA10 subunit family. As to quaternary structure, complex I is composed of 45 different subunits. This a component of the hydrophobic protein fraction. Forms a complex including sicily, ND-42 and Hsp83; the complex is necessary to chaperone ND-42 in the cytoplasm before mitochondrial import; the interaction between sicily and ND-42 is direct and occurs preferably between the unprocessed forms in the cytoplasm. FAD is required as a cofactor. Expressed in muscles (at protein level).

The protein localises to the mitochondrion matrix. The protein resides in the cytoplasm. Its function is as follows. Accessory subunit of the mitochondrial membrane respiratory chain NADH dehydrogenase (Complex I), that is believed not to be involved in catalysis. Complex I functions in the transfer of electrons from NADH to the respiratory chain. The immediate electron acceptor for the enzyme is believed to be ubiquinone. The chain is NADH dehydrogenase [ubiquinone] 1 alpha subcomplex subunit 10, mitochondrial from Drosophila melanogaster (Fruit fly).